The following is a 114-amino-acid chain: Large ribosomal subunit protein uL22 (114 aa).

It belongs to the universal ribosomal protein uL22 family. In terms of assembly, part of the 50S ribosomal subunit.

In terms of biological role, this protein binds specifically to 23S rRNA; its binding is stimulated by other ribosomal proteins, e.g. L4, L17, and L20. It is important during the early stages of 50S assembly. It makes multiple contacts with different domains of the 23S rRNA in the assembled 50S subunit and ribosome. Functionally, the globular domain of the protein is located near the polypeptide exit tunnel on the outside of the subunit, while an extended beta-hairpin is found that lines the wall of the exit tunnel in the center of the 70S ribosome. The chain is Large ribosomal subunit protein uL22 from Ehrlichia chaffeensis (strain ATCC CRL-10679 / Arkansas).